Consider the following 34-residue polypeptide: Phallacidin proprotein 1 (34 aa).

Residues M1–P10 constitute a propeptide that is removed on maturation. The segment at residues A11–P17 is a cross-link (cyclopeptide (Ala-Pro)). A cross-link (2'-cysteinyl-6'-hydroxytryptophan sulfoxide (Trp-Cys)) is located at residues W12–C16. Residues C18–C34 constitute a propeptide that is removed on maturation.

Belongs to the MSDIN fungal toxin family. Processed by the macrocyclase-peptidase enzyme POPB to yield a toxic cyclic heptapeptide. POPB first removes 10 residues from the N-terminus. Conformational trapping of the remaining peptide forces the enzyme to release this intermediate rather than proceed to macrocyclization. The enzyme rebinds the remaining peptide in a different conformation and catalyzes macrocyclization of the N-terminal 7 residues.

Its function is as follows. Major toxin that belongs to the bicyclic heptapeptides called phallotoxins. Although structurally related to amatoxins, phallotoxins have a different mode of action, which is the stabilization of F-actin. Phallotoxins are poisonous when administered parenterally, but not orally because of poor absorption. This is Phallacidin proprotein 1 from Amanita bisporigera (Destroying angel).